The primary structure comprises 133 residues: Ribosome-binding factor A (133 aa).

Belongs to the RbfA family. Monomer. Binds 30S ribosomal subunits, but not 50S ribosomal subunits or 70S ribosomes.

It localises to the cytoplasm. One of several proteins that assist in the late maturation steps of the functional core of the 30S ribosomal subunit. Associates with free 30S ribosomal subunits (but not with 30S subunits that are part of 70S ribosomes or polysomes). Required for efficient processing of 16S rRNA. May interact with the 5'-terminal helix region of 16S rRNA. In Shigella boydii serotype 18 (strain CDC 3083-94 / BS512), this protein is Ribosome-binding factor A.